Here is a 605-residue protein sequence, read N- to C-terminus: Aspartate--tRNA(Asp/Asn) ligase (605 aa).

Glutamate 176 is a binding site for L-aspartate. The segment at 200 to 203 (QQFK) is aspartate. Positions 222 and 452 each coordinate L-aspartate. 222–224 (RDE) contributes to the ATP binding site. Glutamate 490 is an ATP binding site. Arginine 497 is a binding site for L-aspartate. 542-545 (GIDR) is a binding site for ATP.

The protein belongs to the class-II aminoacyl-tRNA synthetase family. Type 1 subfamily. As to quaternary structure, homodimer.

Its subcellular location is the cytoplasm. The enzyme catalyses tRNA(Asx) + L-aspartate + ATP = L-aspartyl-tRNA(Asx) + AMP + diphosphate. Its function is as follows. Aspartyl-tRNA synthetase with relaxed tRNA specificity since it is able to aspartylate not only its cognate tRNA(Asp) but also tRNA(Asn). Reaction proceeds in two steps: L-aspartate is first activated by ATP to form Asp-AMP and then transferred to the acceptor end of tRNA(Asp/Asn). This is Aspartate--tRNA(Asp/Asn) ligase from Rickettsia prowazekii (strain Madrid E).